The sequence spans 459 residues: Cyclooctatin synthase (459 aa).

Cysteine 408 is a heme binding site.

Belongs to the cytochrome P450 family. Requires heme as cofactor.

The catalysed reaction is cyclooctat-9-ene-5,7-diol + AH2 + O2 = cyclooctatin + A + H2O. Involved in the biosynthesis of cyclooctatin, a potent inhibitor of lysophospholipase. Catalyzes the hydroxylation of cyclooctat-9-ene-5,7-diol at C-18 to yield the final product, cyclooctatin. In Streptomyces melanosporofaciens, this protein is Cyclooctatin synthase.